Here is a 152-residue protein sequence, read N- to C-terminus: Fibroblast growth factor 1 (152 aa).

The residue at position 2 (A2) is an N-acetylalanine. The propeptide occupies 2–15 (AEGEITTFTALTEK). Residue N33 participates in heparin binding. The interval 127-143 (KKNGSCKRGPRTHYGQK) is heparin-binding.

The protein belongs to the heparin-binding growth factors family. In terms of assembly, monomer. Homodimer. Interacts with FGFR1, FGFR2, FGFR3 and FGFR4. Affinity between fibroblast growth factors (FGFs) and their receptors is increased by heparan sulfate glycosaminoglycans that function as coreceptors. Found in a complex with FGFBP1, FGF1 and FGF2. Interacts with FGFBP1. Part of a Cu(2+)-dependent multiprotein aggregate containing FGF1, S100A13 and SYT1. Interacts with SYT1. Interacts with S100A13. Interacts with LRRC59. Interacts with CSNKA, CSNKB and FIBP. While binding with LRRC59, CSNKA and FIBP seem mutually exclusive, CSNKB and FIBP may cooperatively interact with FGF1. Forms a ternary complex with FGFR1 and ITGAV:ITGB3 and induces the recruitment of PTPN11 to the complex. Post-translationally, in the nucleus, phosphorylated by PKC/PRKCD.

Its subcellular location is the secreted. The protein resides in the cytoplasm. It localises to the cell cortex. The protein localises to the cytosol. It is found in the nucleus. In terms of biological role, plays an important role in the regulation of cell survival, cell division, angiogenesis, cell differentiation and cell migration. Functions as a potent mitogen in vitro. Acts as a ligand for FGFR1 and integrins. Binds to FGFR1 in the presence of heparin leading to FGFR1 dimerization and activation via sequential autophosphorylation on tyrosine residues which act as docking sites for interacting proteins, leading to the activation of several signaling cascades. Binds to integrin ITGAV:ITGB3. Its binding to integrin, subsequent ternary complex formation with integrin and FGFR1, and the recruitment of PTPN11 to the complex are essential for FGF1 signaling. Induces the phosphorylation and activation of FGFR1, FRS2, MAPK3/ERK1, MAPK1/ERK2 and AKT1. Can induce angiogenesis. This Sus scrofa (Pig) protein is Fibroblast growth factor 1 (FGF1).